Here is a 423-residue protein sequence, read N- to C-terminus: Pentamidine resistance factor, mitochondrial (423 aa).

A helical transmembrane segment spans residues 199–219 (PVFFTLVFIFEEVSVLIFTFF).

In terms of assembly, interacts with COX18. This interaction may be essential for its insertion into mitochondrial inner membrane.

It is found in the mitochondrion inner membrane. Probably involved in mitochondrial export. Confers resistance to the anti-pneumocystis carinii drug pentamidine. May act by the removal of pentamidine, or its damage targets, from the matrix by an active-transport mechanism. The protein is Pentamidine resistance factor, mitochondrial (PNT1) of Saccharomyces cerevisiae (strain ATCC 204508 / S288c) (Baker's yeast).